The following is a 608-amino-acid chain: uncharacterized protein (608 aa).

Positions 1 to 38 (MWLQQRLKVFPGLLSSSWARRVLAVSGFLVIIYWYIFS) are cleaved as a signal peptide. Over 39 to 563 (GSLFRSFWYA…EEHMAKQYRG (525 aa)) the chain is Extracellular. N337 carries an N-linked (GlcNAc...) asparagine glycan. Residues 564 to 584 (LPFLFWFSVASLITLFHLFLF) form a helical membrane-spanning segment. At 585 to 608 (KLIYNEYCGPGAKPLFRSKEDTSV) the chain is on the cytoplasmic side.

It localises to the membrane. This is an uncharacterized protein from Xenopus tropicalis (Western clawed frog).